Consider the following 717-residue polypeptide: SUN domain-containing protein 2 (717 aa).

Positions 1-66 (MSRRSQRLTR…PQLGPSSDAH (66 aa)) are disordered. Residues 1-139 (MSRRSQRLTR…SSSGYSSEDD (139 aa)) are LMNA-binding. Over 1–212 (MSRRSQRLTR…LTRRFSSLKT (212 aa)) the chain is Nuclear. Phosphoserine is present on Ser12. The segment covering 19–32 (SSSSGGSSVAGSQS) has biased composition (low complexity). Ser38 and Ser54 each carry phosphoserine. Thr107 carries the post-translational modification Phosphothreonine. Ser110, Ser113, Ser116, and Ser136 each carry phosphoserine. The helical transmembrane segment at 213-233 (FLWFLLPLLLLTCLTYGAWYF) threads the bilayer. At 234 to 717 (YPYGLQTFHP…RFRVHGEPAH (484 aa)) the chain is on the perinuclear space side. 3 coiled-coil regions span residues 273–296 (EQRV…EFSS), 348–440 (RRET…EEVG), and 475–506 (LLQR…SARE). The tract at residues 507–717 (AAASLSLTLQ…RFRVHGEPAH (211 aa)) is sufficient for interaction with SYNE1 and SYNE2. Positions 555–716 (GASVISTRCS…YRFRVHGEPA (162 aa)) constitute an SUN domain. Cys601 and Cys705 are disulfide-bonded. N-linked (GlcNAc...) asparagine glycosylation is present at Asn636.

As to quaternary structure, core component of the LINC complex which is composed of inner nuclear membrane SUN domain-containing proteins coupled to outer nuclear membrane KASH domain-containing nesprins. SUN and KASH domain-containing proteins seem to bind each other promiscuously; however, differentially expression of LINC complex constituents is giving rise to specific assemblies. At least SUN1/2-containing core LINC complexes are proposed to be hexameric composed of three protomers of each KASH and SUN domain-containing protein. Interacts with SYNE2; the SUN2:SYNE2/KASH2 LINC complex is a heterohexamer; the homotrimeric cloverleave-like conformation of the SUN domain is a prerequisite for LINC complex formation in which three separate SYNE2/KASH2 peptides bind at the interface of adjacent SUN domains. Component of a probable SUN2:KASH5 LINC complex. Interacts with SYNE1 and SYNE3; probably forming respective LINC complexes. Interacts with A-type lamin. Interaction with lamins B1 and C is hardly detectable. Interacts with EMD and RAB5A. Interacts with TMEM43. Interacts with TMEM201. In terms of processing, the disulfide bond with SYNE2 is required for stability of the SUN2:SYNE2/KASH2 LINC complex under tensile forces though not required for the interaction. The disulfide bond is proposed to be conserved in LINC complexes involved in force transmission. In terms of tissue distribution, widely expressed. Highly expressed in heart, lung and muscle. Weakly expressed in fetal heart. Slightly overexpressed in some heart tissues form patients with congenital heart defects.

Its subcellular location is the nucleus inner membrane. The protein localises to the nucleus envelope. The protein resides in the endosome membrane. Its function is as follows. As a component of the LINC (LInker of Nucleoskeleton and Cytoskeleton) complex, involved in the connection between the nuclear lamina and the cytoskeleton. The nucleocytoplasmic interactions established by the LINC complex play an important role in the transmission of mechanical forces across the nuclear envelope and in nuclear movement and positioning. Specifically, SYNE2 and SUN2 assemble in arrays of transmembrane actin-associated nuclear (TAN) lines which are bound to F-actin cables and couple the nucleus to retrograde actin flow during actin-dependent nuclear movement. Required for interkinetic nuclear migration (INM) and essential for nucleokinesis and centrosome-nucleus coupling during radial neuronal migration in the cerebral cortex and during glial migration. Required for nuclear migration in retinal photoreceptor progenitors implicating association with cytoplasmic dynein-dynactin and kinesin motor complexes, and probably B-type lamins; SUN1 and SUN2 seem to act redundantly. The SUN1/2:KASH5 LINC complex couples telomeres to microtubules during meiosis; SUN1 and SUN2 seem to act at least partial redundantly. Anchors chromosome movement in the prophase of meiosis and is involved in selective gene expression of coding and non-coding RNAs needed for gametogenesis. Required for telomere attachment to nuclear envelope and gametogenesis. May also function on endocytic vesicles as a receptor for RAB5-GDP and participate in the activation of RAB5. The polypeptide is SUN domain-containing protein 2 (Homo sapiens (Human)).